A 546-amino-acid chain; its full sequence is Zinc finger and BTB domain-containing protein 7A (546 aa).

Positions 34 to 101 constitute a BTB domain; the sequence is CDVVILVEGQ…AYTATLTVST (68 aa). Positions 189-288 are disordered; it reads QEDEEEPDCN…SFVPTGAEAE (100 aa). 3 C2H2-type zinc fingers span residues 359-381, 387-409, and 415-437; these read QKCPICAKVIQGAGKLPRHIRTH, YECNICNVRFTRQDKLKVHMRKH, and YLCQQCGAAFAHNYDLKNHMRVH. Residues 443 to 467 form a C2H2-type 4; atypical zinc finger; the sequence is YQCDSCFKTFVRSDHLHRHLKKDGC. Residues 463-546 are disordered; the sequence is KKDGCNGIPS…AAEGSAPGPS (84 aa). The span at 534–546 shows a compositional bias: low complexity; sequence AGGAAEGSAPGPS.

Its subcellular location is the nucleus. Functionally, transcription factor that represses the transcription of a wide range of genes involved in cell proliferation and differentiation. Directly and specifically binds to the consensus sequence 5'-[GA][CA]GACCCCCCCCC-3' and represses transcription both by regulating the organization of chromatin and through the direct recruitment of transcription factors to gene regulatory regions. May also play a role, independently of its transcriptional activity, in double-strand break repair via classical non-homologous end joining/cNHEJ and in alternative splicing. The sequence is that of Zinc finger and BTB domain-containing protein 7A from Gallus gallus (Chicken).